The following is a 382-amino-acid chain: D-galactonate dehydratase (382 aa).

Asp183 serves as a coordination point for Mg(2+). The active-site Proton donor is the His185. Mg(2+)-binding residues include Glu209 and Glu235. Catalysis depends on His285, which acts as the Proton acceptor.

It belongs to the mandelate racemase/muconate lactonizing enzyme family. GalD subfamily. It depends on Mg(2+) as a cofactor.

It catalyses the reaction D-galactonate = 2-dehydro-3-deoxy-D-galactonate + H2O. It participates in carbohydrate acid metabolism; D-galactonate degradation; D-glyceraldehyde 3-phosphate and pyruvate from D-galactonate: step 1/3. Catalyzes the dehydration of D-galactonate to 2-keto-3-deoxy-D-galactonate. The polypeptide is D-galactonate dehydratase (Cronobacter sakazakii (strain ATCC BAA-894) (Enterobacter sakazakii)).